We begin with the raw amino-acid sequence, 83 residues long: Type 3 secretion system needle filament protein (83 aa).

Belongs to the SctF family. In terms of assembly, the core secretion machinery of the T3SS is composed of approximately 20 different proteins, including cytoplasmic components, a base, an export apparatus and a needle. This subunit polymerizes and forms the helical needle filament. Interacts with the needle tip protein IpaD/SctA. Interacts with the export apparatus components SpaP/SctR, SpaQ/SctS and SpaR/SctT.

Its subcellular location is the secreted. The protein resides in the cell surface. Its function is as follows. Component of the type III secretion system (T3SS), also called injectisome, which is used to inject bacterial effector proteins into eukaryotic host cells. MxiH/SctF forms the external needle filament that protrudes from the bacterial surface. Functionally, during infection, can induce innate immune responses. The needle proteins interact with host TLR2 or TLR4, and induce signaling by NF-kappa-B and/or AP-1. This activation is MyD88 dependent and results in increased expression of cytokines, including TNF-alpha, IL-6 and IL-8. This chain is Type 3 secretion system needle filament protein, found in Shigella flexneri.